A 323-amino-acid chain; its full sequence is Sphingolipid delta(4)-desaturase/C4-monooxygenase DES2 (323 aa).

Gly-2 carries N-myristoyl glycine lipidation. 2 helical membrane-spanning segments follow: residues 45–65 (WTVTAMVLAQLLACWLAQGLA) and 68–88 (WLFFWAYAFGGCVNHSLTLAI). A Histidine box-1 motif is present at residues 89–93 (HDISH). A required for C4-hydroxylase activity region spans residues 95–99 (TAFGT). The short motif at 128-132 (HVDHH) is the Histidine box-2 element. Residues 209–231 (MVYLLASSLLGLGLHPISGHFVA) form a helical membrane-spanning segment. The Histidine box-3 motif lies at 259-263 (HMEHH).

Belongs to the fatty acid desaturase type 1 family. DEGS subfamily.

It is found in the endoplasmic reticulum membrane. It carries out the reaction a dihydroceramide + 2 Fe(II)-[cytochrome b5] + O2 + 2 H(+) = a phytoceramide + 2 Fe(III)-[cytochrome b5] + H2O. It catalyses the reaction an N-acylsphinganine + 2 Fe(II)-[cytochrome b5] + O2 + 2 H(+) = an N-acylsphing-4-enine + 2 Fe(III)-[cytochrome b5] + 2 H2O. The catalysed reaction is N-octanoylsphinganine + 2 Fe(II)-[cytochrome b5] + O2 + 2 H(+) = N-octanoyl-4-hydroxysphinganine + 2 Fe(III)-[cytochrome b5] + H2O. The enzyme catalyses an N-acylsphinganine + 2 Fe(II)-[cytochrome b5] + O2 + 2 H(+) = an N-acyl-(4R)-4-hydroxysphinganine + 2 Fe(III)-[cytochrome b5] + H2O. It participates in membrane lipid metabolism; sphingolipid biosynthesis. Functionally, bifunctional enzyme which acts both as a sphingolipid delta(4)-desaturase and a sphingolipid C4-monooxygenase. In Bos taurus (Bovine), this protein is Sphingolipid delta(4)-desaturase/C4-monooxygenase DES2.